Consider the following 379-residue polypeptide: Putative zinc metalloprotease sll0528 (379 aa).

The next 2 helical transmembrane spans lie at 20-40 and 54-74; these read LFGI…LVTL and GGTP…SVVA. Position 75 (H75) interacts with Zn(2+). The active site involves E76. H79 is a Zn(2+) binding site. A run of 3 helical transmembrane segments spans residues 115–135, 148–168, and 212–232; these read FAVA…LTIV, IIGL…IPGL, and GILN…WFLL. 2 consecutive CBS domains span residues 257–315 and 322–379; these read VIPN…DWPQ and MQYP…TSAA.

Belongs to the peptidase M50B family. It depends on Zn(2+) as a cofactor.

Its subcellular location is the cell membrane. The polypeptide is Putative zinc metalloprotease sll0528 (Synechocystis sp. (strain ATCC 27184 / PCC 6803 / Kazusa)).